A 394-amino-acid polypeptide reads, in one-letter code: Proliferation-associated protein 2G4 (394 aa).

S2 carries the N-acetylserine modification. Position 2 is a phosphoserine (S2). Positions 2–48 are necessary for nucleolar localization; the sequence is SGEDEQQEQTIAEDLVVTKYKMGGDIANRVLRSLVEASSSGVSVLSL. The segment at 46 to 54 is RNA-binding; it reads LSLCEKGDA. K298 is covalently cross-linked (Glycyl lysine isopeptide (Lys-Gly) (interchain with G-Cter in SUMO2)). Positions 301–394 are necessary for nucleolar localization; sequence LLQPFNVLYE…ETLEENGAGD (94 aa). Phosphoserine is present on S335. Residues 358–394 form a disordered region; that stretch reads LQSSASRKTQKKKKKKASKTAENATSGETLEENGAGD. A Phosphoserine; by PKC/PRKCD modification is found at S361. The segment at 361-375 is interaction with RNA; it reads SASRKTQKKKKKKAS. Residues 365 to 375 are compositionally biased toward basic residues; that stretch reads KTQKKKKKKAS. 2 positions are modified to phosphothreonine: T366 and T386.

Belongs to the peptidase M24 family. Isoform 2 interacts with the cytoplasmic domain of non-phosphorylated ERBB3; the interaction requires PKC activity. Interacts with AR. Treatment with HRG leads to dissociation from ERBB3 and increases association with AR. Interacts with nucleolin/NCL. Component of a ribonucleoprotein complex containing at least PA2G4, NCL, TOP1, PABPC2, RPLP0, acetylated histone H1 (HIST1H1A or H1F1), histone H1 2/4, RPL4, RPL8, RPL15, RPL18, RPL18A, RPL21, RPL11, RPL12, RPL28, RPL27, RPLP2 and RPL24. Interacts with HDAC2. Interacts with RB1; the interaction is enhanced upon PA2G4 dephosphorylation. Isoform 1 and isoform 2 interact with RNF20. Isoform 2 interacts with HUWE1. Interacts with AKT1. Interacts with DNAJC21. Post-translationally, phosphorylated on serine and threonine residues. Phosphorylation is enhanced by HRG treatment. Basal phosphorylation is PKC-dependent and HRG-induced phosphorylation is predominantly PKC-independent. Phosphorylation at Ser-361 by PKC/PRKCD regulates its nucleolar localization. In terms of processing, isoform 2 is polyubiquitinated, leading to proteasomal degradation and phosphorylation by PKC/PRKCD enhances polyubiquitination.

The protein resides in the cytoplasm. It localises to the nucleus. It is found in the nucleolus. Functionally, may play a role in a ERBB3-regulated signal transduction pathway. Seems be involved in growth regulation. Acts a corepressor of the androgen receptor (AR) and is regulated by the ERBB3 ligand neuregulin-1/heregulin (HRG). Inhibits transcription of some E2F1-regulated promoters, probably by recruiting histone acetylase (HAT) activity. Binds RNA. Associates with 28S, 18S and 5.8S mature rRNAs, several rRNA precursors and probably U3 small nucleolar RNA. May be involved in regulation of intermediate and late steps of rRNA processing. May be involved in ribosome assembly. Mediates cap-independent translation of specific viral IRESs (internal ribosomal entry site). Together with PTBP1 is required for the translation initiation on the foot-and-mouth disease virus (FMDV) IRES. Regulates cell proliferation, differentiation, and survival. Isoform 1 suppresses apoptosis whereas isoform 2 promotes cell differentiation. The polypeptide is Proliferation-associated protein 2G4 (Pa2g4) (Rattus norvegicus (Rat)).